Reading from the N-terminus, the 136-residue chain is Large ribosomal subunit protein uL16 (136 aa).

It belongs to the universal ribosomal protein uL16 family. Part of the 50S ribosomal subunit.

Its function is as follows. Binds 23S rRNA and is also seen to make contacts with the A and possibly P site tRNAs. In Rickettsia peacockii (strain Rustic), this protein is Large ribosomal subunit protein uL16.